Here is a 119-residue protein sequence, read N- to C-terminus: Large ribosomal subunit protein uL18 (119 aa).

The protein belongs to the universal ribosomal protein uL18 family. As to quaternary structure, part of the 50S ribosomal subunit; part of the 5S rRNA/L5/L18/L25 subcomplex. Contacts the 5S and 23S rRNAs.

Its function is as follows. This is one of the proteins that bind and probably mediate the attachment of the 5S RNA into the large ribosomal subunit, where it forms part of the central protuberance. The protein is Large ribosomal subunit protein uL18 of Chlorobaculum tepidum (strain ATCC 49652 / DSM 12025 / NBRC 103806 / TLS) (Chlorobium tepidum).